The chain runs to 1775 residues: Atrochrysone carboxylic acid synthase (1775 aa).

The 228-residue stretch at 35-262 (LRRLQALSKD…YAKWASLPIF (228 aa)) folds into the Starter acyltransferase (SAT) domain. The Ketosynthase family 3 (KS3) domain occupies 400-833 (DSKIAIVGMS…GGNTTMLLEE (434 aa)). Residues Cys-573, His-708, and His-750 each act as for beta-ketoacyl synthase activity in the active site. In terms of domain architecture, Malonyl-CoA:ACP transacylase (MAT) spans 934 to 1244 (FAFTGQGAFY…ENNWNTLADS (311 aa)). A product template (PT) domain region spans residues 1313-1631 (TSSIHQVLQE…RSLLPTFFSP (319 aa)). An N-terminal hotdog fold region spans residues 1317 to 1451 (HQVLQEDVTG…SAVVEYGDAN (135 aa)). In terms of domain architecture, PKS/mFAS DH spans 1317-1626 (HQVLQEDVTG…FRRFPRSLLP (310 aa)). His-1349 serves as the catalytic Proton acceptor; for dehydratase activity. The C-terminal hotdog fold stretch occupies residues 1480–1626 (AAVLPRNMAY…FRRFPRSLLP (147 aa)). Residue Asp-1537 is the Proton donor; for dehydratase activity of the active site. The disordered stretch occupies residues 1671–1697 (TAAPVPAPAPVPAKRAEPAPAAAQAAA). Over residues 1688–1697 (PAPAAAQAAA) the composition is skewed to low complexity. The 78-residue stretch at 1697–1774 (ATQNPTITGA…ELKTYIEETF (78 aa)) folds into the Carrier domain. An O-(pantetheine 4'-phosphoryl)serine modification is found at Ser-1734.

The enzyme catalyses holo-[ACP] + 8 malonyl-CoA + 8 H(+) = atrochrysone carboxyl-[ACP] + 8 CO2 + 8 CoA + 2 H2O. Its pathway is secondary metabolite biosynthesis. Its function is as follows. Non-reducing polyketide synthase; part of the gene cluster that mediates the biosynthesis of physcion, a natural anthraquinone fungicide that can prevent plant fungal infections. The pathway begins with the polyketide synthase AcPKS that condenses 8 malonyl-CoA units to synthesize atrochrysone thioester which is released from the synthase by the atrochrysone carboxyl ACP thioesterase AcTE that breaks the thioester bond and leads to free atrochrysone carboxylic acid. Spontaneous decarboxylation of atrochrysone carboxylic acid leads to the formation of atrochrysone. Then, atrochrysone undergoes spontaneous dehydration and oxidation, giving the products emodin anthrone and emodin. The O-methyltransferase AcOMT then methylates the C-6 hydroxyl of emodin to form physcion. This Aspergillus chevalieri (Eurotium chevalieri) protein is Atrochrysone carboxylic acid synthase.